The chain runs to 161 residues: Cyclic pyranopterin monophosphate synthase (161 aa).

Substrate contacts are provided by residues 75–77 (MCH) and 115–116 (ME). Asp130 is an active-site residue.

The protein belongs to the MoaC family. In terms of assembly, homohexamer; trimer of dimers.

It catalyses the reaction (8S)-3',8-cyclo-7,8-dihydroguanosine 5'-triphosphate = cyclic pyranopterin phosphate + diphosphate. The protein operates within cofactor biosynthesis; molybdopterin biosynthesis. Functionally, catalyzes the conversion of (8S)-3',8-cyclo-7,8-dihydroguanosine 5'-triphosphate to cyclic pyranopterin monophosphate (cPMP). This Bacillus cereus (strain 03BB102) protein is Cyclic pyranopterin monophosphate synthase.